The primary structure comprises 145 residues: UPF0735 ACT domain-containing protein CPR_1404 (145 aa).

The region spanning 69-144 (IFNMVVTHEK…GVEKVEFVAM (76 aa)) is the ACT domain.

Belongs to the UPF0735 family.

This chain is UPF0735 ACT domain-containing protein CPR_1404, found in Clostridium perfringens (strain SM101 / Type A).